The chain runs to 380 residues: Cytochrome b (380 aa).

4 helical membrane-spanning segments follow: residues 34–54 (FGSL…LLAM), 78–99 (WLIR…YMHI), 114–134 (WNTG…GYVL), and 179–199 (FFAL…IHLT). Heme b contacts are provided by His84 and His98. Positions 183 and 197 each coordinate heme b. His202 contacts a ubiquinone. 4 consecutive transmembrane segments (helical) span residues 227 to 247 (LKDI…ALFS), 289 to 309 (LGGV…PFLH), 321 to 341 (LSQS…WIGS), and 348 to 368 (FIII…ILFP).

It belongs to the cytochrome b family. As to quaternary structure, the cytochrome bc1 complex contains 11 subunits: 3 respiratory subunits (MT-CYB, CYC1 and UQCRFS1), 2 core proteins (UQCRC1 and UQCRC2) and 6 low-molecular weight proteins (UQCRH/QCR6, UQCRB/QCR7, UQCRQ/QCR8, UQCR10/QCR9, UQCR11/QCR10 and a cleavage product of UQCRFS1). This cytochrome bc1 complex then forms a dimer. It depends on heme b as a cofactor.

It is found in the mitochondrion inner membrane. In terms of biological role, component of the ubiquinol-cytochrome c reductase complex (complex III or cytochrome b-c1 complex) that is part of the mitochondrial respiratory chain. The b-c1 complex mediates electron transfer from ubiquinol to cytochrome c. Contributes to the generation of a proton gradient across the mitochondrial membrane that is then used for ATP synthesis. The protein is Cytochrome b (MT-CYB) of Oceanodroma tristrami (Tristram's storm-petrel).